A 278-amino-acid polypeptide reads, in one-letter code: HCLS1-associated protein X-1 (278 aa).

N-acetylserine is present on serine 2. Residues 2–43 (SVFDLFRGFFGFPGPRSHRDPFFGGMTRDDDDDEDDEEEEDS) are required for localization in mitochondria. 2 disordered regions span residues 15-50 (GPRS…GRES) and 99-262 (LPSH…ALDD). The span at 30-43 (DDDDDEDDEEEEDS) shows a compositional bias: acidic residues. Residues 113-278 (TPGVRLREGQ…LLLGRWFRSR (166 aa)) are involved in HCLS1 binding. Positions 132-152 (PDSHQPRIFEGVLESHAKPES) are enriched in basic and acidic residues. Residues 174 to 205 (VSPHSRAREDKDLDSQVSQEGLGPLLQPQPKS) form an involved in CASP9 binding region. The interval 175–246 (SPHSRAREDK…TTVTHQEAHD (72 aa)) is involved in GNA13 binding. The interval 182–278 (EDKDLDSQVS…LLLGRWFRSR (97 aa)) is required for localization in sarcoplasmic reticulum. Residues 183-278 (DKDLDSQVSQ…LLLGRWFRSR (96 aa)) form an involved in PKD2 binding region. Phosphoserine is present on residues serine 188 and serine 191. The tract at residues 202–224 (QPKSYFKSISVTKITKPDGTVEE) is involved in PLN binding. The segment at 202 to 244 (QPKSYFKSISVTKITKPDGTVEEHRTVVDSEGRRETTVTHQEA) is involved in ATP2A2 binding. The segment at 209 to 278 (SISVTKITKP…LLLGRWFRSR (70 aa)) is mediates interaction with UCP3. Over residues 216–254 (TKPDGTVEEHRTVVDSEGRRETTVTHQEAHDSSRSDPDP) the composition is skewed to basic and acidic residues. The required for ITGB6 binding stretch occupies residues 269–278 (LLLGRWFRSR).

It belongs to the HAX1 family. Interacts with ABCB1, ABCB4 and ABCB11. Directly associates with HCLS1/HS1, through binding to its N-terminal region. Interacts with CTTN. Interacts with PKD2. Interacts with GNA13. Interacts with CASP9. Interacts with ITGB6. Interacts with PLN and ATP2A2; these interactions are inhibited by calcium. Interacts with GRB7. Interacts (via C-terminus) with XIAP/BIRC4 (via BIR 2 domain and BIR 3 domain) and this interaction blocks ubiquitination of XIAP/BIRC4. Interacts with TPC2. Interacts with KCNC3. Interacts with XPO1. Interacts with RNF217. Interacts with UCP3; the interaction is direct and calcium-dependent. Interacts with MAPRE2; this interaction regulates cell migration in keratinocytes. Present in striated muscles (at protein level).

The protein resides in the mitochondrion matrix. It is found in the endoplasmic reticulum. The protein localises to the nucleus membrane. It localises to the cytoplasmic vesicle. Its subcellular location is the cytoplasm. The protein resides in the cell cortex. It is found in the cell membrane. The protein localises to the sarcoplasmic reticulum. It localises to the P-body. Its subcellular location is the nucleus. Its function is as follows. Recruits the Arp2/3 complex to the cell cortex and regulates reorganization of the cortical actin cytoskeleton via its interaction with KCNC3 and the Arp2/3 complex. Slows down the rate of inactivation of KCNC3 channels. Promotes GNA13-mediated cell migration. Involved in the clathrin-mediated endocytosis pathway. May be involved in internalization of ABC transporters such as ABCB11. May inhibit CASP9 and CASP3. Promotes cell survival. May regulate intracellular calcium pools. The sequence is that of HCLS1-associated protein X-1 (Hax1) from Rattus norvegicus (Rat).